The chain runs to 305 residues: PI-PLC X domain-containing protein 1 (305 aa).

Residues 1–24 (MSMSTLRHFLWLGALLLATIQVSA) form the signal peptide. Residues 25–189 (LPTAQDLICN…RLIVFVDSKA (165 aa)) enclose the PI-PLC X-box domain. Active-site residues include histidine 53 and histidine 97. An N-linked (GlcNAc...) asparagine glycan is attached at asparagine 237.

The protein localises to the secreted. This chain is PI-PLC X domain-containing protein 1, found in Arthroderma benhamiae (strain ATCC MYA-4681 / CBS 112371) (Trichophyton mentagrophytes).